A 99-amino-acid chain; its full sequence is Nucleoid-associated protein SPy_1862/M5005_Spy1580 (99 aa).

The protein belongs to the YbaB/EbfC family. In terms of assembly, homodimer.

It localises to the cytoplasm. The protein resides in the nucleoid. In terms of biological role, binds to DNA and alters its conformation. May be involved in regulation of gene expression, nucleoid organization and DNA protection. The sequence is that of Nucleoid-associated protein SPy_1862/M5005_Spy1580 from Streptococcus pyogenes serotype M1.